Consider the following 164-residue polypeptide: Ecotin (164 aa).

The N-terminal stretch at 1-20 (MKMFVPAVVFAALASASAWA) is a signal peptide. A disulfide bond links Cys-72 and Cys-109.

This sequence belongs to the protease inhibitor I11 (ecotin) family. As to quaternary structure, homodimer.

The protein localises to the periplasm. In terms of biological role, general inhibitor of pancreatic serine proteases: inhibits chymotrypsin, trypsin, elastases, factor X, kallikrein as well as a variety of other proteases. This chain is Ecotin, found in Salmonella paratyphi A (strain ATCC 9150 / SARB42).